Consider the following 313-residue polypeptide: Porphobilinogen deaminase (313 aa).

C242 carries the S-(dipyrrolylmethanemethyl)cysteine modification.

This sequence belongs to the HMBS family. Monomer. Requires dipyrromethane as cofactor.

It catalyses the reaction 4 porphobilinogen + H2O = hydroxymethylbilane + 4 NH4(+). Its pathway is porphyrin-containing compound metabolism; protoporphyrin-IX biosynthesis; coproporphyrinogen-III from 5-aminolevulinate: step 2/4. Its function is as follows. Tetrapolymerization of the monopyrrole PBG into the hydroxymethylbilane pre-uroporphyrinogen in several discrete steps. The protein is Porphobilinogen deaminase of Escherichia coli (strain SE11).